A 200-amino-acid polypeptide reads, in one-letter code: Serine/threonine-protein kinase mos (200 aa).

Residues 2–200 (LCLLQPLGSG…ELLKGERVTA (199 aa)) enclose the Protein kinase domain. Residues 8 to 16 (LGSGGFGSV) and lysine 29 contribute to the ATP site. The Proton acceptor role is filled by aspartate 143.

This sequence belongs to the protein kinase superfamily. Ser/Thr protein kinase family.

It carries out the reaction L-seryl-[protein] + ATP = O-phospho-L-seryl-[protein] + ADP + H(+). It catalyses the reaction L-threonyl-[protein] + ATP = O-phospho-L-threonyl-[protein] + ADP + H(+). In Nycticorax nycticorax (Black-crowned night-heron), this protein is Serine/threonine-protein kinase mos (MOS).